We begin with the raw amino-acid sequence, 85 residues long: RNA-binding protein KhpA (85 aa).

Positions tyrosine 32–serine 85 constitute a KH domain.

This sequence belongs to the KhpA RNA-binding protein family. Forms a complex with KhpB.

Its subcellular location is the cytoplasm. In terms of biological role, a probable RNA chaperone. Forms a complex with KhpB which binds to cellular RNA and controls its expression. Plays a role in peptidoglycan (PG) homeostasis and cell length regulation. Necessary for correct cell elongation. The chain is RNA-binding protein KhpA from Lactiplantibacillus plantarum (strain ATCC BAA-793 / NCIMB 8826 / WCFS1) (Lactobacillus plantarum).